Consider the following 407-residue polypeptide: Heparan-sulfate 6-O-sulfotransferase 1-B (407 aa).

The Cytoplasmic segment spans residues Met-8–Lys-14. A helical; Signal-anchor for type II membrane protein transmembrane segment spans residues Phe-15–Pro-35. Topologically, residues Gly-36–Trp-407 are lumenal. His-92–Thr-100 provides a ligand contact to 3'-phosphoadenylyl sulfate. Substrate-binding positions include Lys-122–Lys-123, Arg-139, Trp-144, and His-149. The Proton acceptor role is filled by His-149. The 3'-phosphoadenylyl sulfate site is built by Arg-183 and Ser-191. Substrate-binding residues include His-195 and Trp-202. Asn-262 carries an N-linked (GlcNAc...) asparagine glycan. Met-315 to Tyr-317 contacts 3'-phosphoadenylyl sulfate. A glycan (N-linked (GlcNAc...) asparagine) is linked at Asn-318. Arg-321–Ala-322 is a binding site for 3'-phosphoadenylyl sulfate. N-linked (GlcNAc...) asparagine glycosylation occurs at Asn-329.

The protein belongs to the sulfotransferase 6 family. During early somitogenesis, first expressed in floor plate and somites. During mid-somitogenesis, expressed strongly in somites and more weakly in eye and hindbrain. During late somitogenesis, expressed in eye, hindbrain and posterior somites. At 24 hours post-fertilization (hpf), expressed in lens, forebrain, hindbrain, otic vesicle, anterior spinal cord neurons and posterior somites. At 36 hpf, expressed in the retinal ciliary marginal zone, brain, pancreas and weakly in pectoral fin. At 48 hpf, expressed in the retinal ciliary marginal zone, retinal ganglion cells, rhombomeres, otic vesicle and weakly in pectoral fin.

The protein resides in the membrane. The enzyme catalyses alpha-D-glucosaminyl-[heparan sulfate](n) + 3'-phosphoadenylyl sulfate = 6-sulfo-alpha-D-glucosaminyl-[heparan sulfate](n) + adenosine 3',5'-bisphosphate + H(+). Its function is as follows. 6-O-sulfation enzyme which catalyzes the transfer of sulfate from 3'-phosphoadenosine 5'-phosphosulfate (PAPS) to position 6 of the N-sulfoglucosamine residue (GlcNS) of heparan sulfate. This Danio rerio (Zebrafish) protein is Heparan-sulfate 6-O-sulfotransferase 1-B.